The following is a 170-amino-acid chain: Large ribosomal subunit protein bL17 (170 aa).

The span at 124–134 (AAEAPKAAKAA) shows a compositional bias: low complexity. The interval 124 to 170 (AAEAPKAAKAAPVKEAKPAAEEAPAKPKRTRKPKADEADAEAAKEEN) is disordered. Basic and acidic residues-rich tracts occupy residues 135-148 (PVKE…EAPA) and 156-170 (PKAD…KEEN).

This sequence belongs to the bacterial ribosomal protein bL17 family. As to quaternary structure, part of the 50S ribosomal subunit. Contacts protein L32.

This Desulfovibrio desulfuricans (strain ATCC 27774 / DSM 6949 / MB) protein is Large ribosomal subunit protein bL17.